The primary structure comprises 183 residues: SsrA-binding protein (183 aa).

Residues 1–27 are disordered; sequence MAKKATLVDHGAAKGKKKAQSKVSKKN. The span at 13 to 27 shows a compositional bias: basic residues; it reads AKGKKKAQSKVSKKN.

The protein belongs to the SmpB family.

It is found in the cytoplasm. In terms of biological role, required for rescue of stalled ribosomes mediated by trans-translation. Binds to transfer-messenger RNA (tmRNA), required for stable association of tmRNA with ribosomes. tmRNA and SmpB together mimic tRNA shape, replacing the anticodon stem-loop with SmpB. tmRNA is encoded by the ssrA gene; the 2 termini fold to resemble tRNA(Ala) and it encodes a 'tag peptide', a short internal open reading frame. During trans-translation Ala-aminoacylated tmRNA acts like a tRNA, entering the A-site of stalled ribosomes, displacing the stalled mRNA. The ribosome then switches to translate the ORF on the tmRNA; the nascent peptide is terminated with the 'tag peptide' encoded by the tmRNA and targeted for degradation. The ribosome is freed to recommence translation, which seems to be the essential function of trans-translation. The polypeptide is SsrA-binding protein (Corynebacterium kroppenstedtii (strain DSM 44385 / JCM 11950 / CIP 105744 / CCUG 35717)).